The following is a 957-amino-acid chain: Glycine dehydrogenase (decarboxylating) (957 aa).

An N6-(pyridoxal phosphate)lysine modification is found at Lys708.

This sequence belongs to the GcvP family. The glycine cleavage system is composed of four proteins: P, T, L and H. Pyridoxal 5'-phosphate serves as cofactor.

It carries out the reaction N(6)-[(R)-lipoyl]-L-lysyl-[glycine-cleavage complex H protein] + glycine + H(+) = N(6)-[(R)-S(8)-aminomethyldihydrolipoyl]-L-lysyl-[glycine-cleavage complex H protein] + CO2. Its function is as follows. The glycine cleavage system catalyzes the degradation of glycine. The P protein binds the alpha-amino group of glycine through its pyridoxal phosphate cofactor; CO(2) is released and the remaining methylamine moiety is then transferred to the lipoamide cofactor of the H protein. The polypeptide is Glycine dehydrogenase (decarboxylating) (Escherichia coli O157:H7).